The chain runs to 436 residues: Glucose-1-phosphate adenylyltransferase (436 aa).

Alpha-D-glucose 1-phosphate is bound by residues Tyr-112, Gly-178, 193–194 (EK), and Ser-211.

The protein belongs to the bacterial/plant glucose-1-phosphate adenylyltransferase family. Homotetramer.

The enzyme catalyses alpha-D-glucose 1-phosphate + ATP + H(+) = ADP-alpha-D-glucose + diphosphate. It participates in glycan biosynthesis; glycogen biosynthesis. Functionally, involved in the biosynthesis of ADP-glucose, a building block required for the elongation reactions to produce glycogen. Catalyzes the reaction between ATP and alpha-D-glucose 1-phosphate (G1P) to produce pyrophosphate and ADP-Glc. In Histophilus somni (strain 129Pt) (Haemophilus somnus), this protein is Glucose-1-phosphate adenylyltransferase.